The chain runs to 105 residues: Sec-independent protein translocase protein TatA (105 aa).

A helical transmembrane segment spans residues 1–21 (MSLGPWEIGIIVLLIIVLFGA). Residues 41–50 (EVKEMNKDGD) are compositionally biased toward basic and acidic residues. Residues 41 to 105 (EVKEMNKDGD…QNYEDPNRTS (65 aa)) are disordered. The segment covering 52 to 92 (PEQQQQPQQQIAPNQIEAPQPNFEQHYQGQQVQQPQNPQTP) has biased composition (low complexity). The segment covering 96-105 (QNYEDPNRTS) has biased composition (basic and acidic residues).

This sequence belongs to the TatA/E family. As to quaternary structure, the Tat system comprises two distinct complexes: a TatABC complex, containing multiple copies of TatA, TatB and TatC subunits, and a separate TatA complex, containing only TatA subunits. Substrates initially bind to the TatABC complex, which probably triggers association of the separate TatA complex to form the active translocon.

The protein resides in the cell membrane. Its function is as follows. Part of the twin-arginine translocation (Tat) system that transports large folded proteins containing a characteristic twin-arginine motif in their signal peptide across membranes. TatA could form the protein-conducting channel of the Tat system. The chain is Sec-independent protein translocase protein TatA from Corynebacterium glutamicum (strain ATCC 13032 / DSM 20300 / JCM 1318 / BCRC 11384 / CCUG 27702 / LMG 3730 / NBRC 12168 / NCIMB 10025 / NRRL B-2784 / 534).